We begin with the raw amino-acid sequence, 372 residues long: 4-hydroxy-3-methylbut-2-en-1-yl diphosphate synthase (flavodoxin) (372 aa).

[4Fe-4S] cluster is bound by residues C270, C273, C305, and E312.

The protein belongs to the IspG family. [4Fe-4S] cluster serves as cofactor.

The enzyme catalyses (2E)-4-hydroxy-3-methylbut-2-enyl diphosphate + oxidized [flavodoxin] + H2O + 2 H(+) = 2-C-methyl-D-erythritol 2,4-cyclic diphosphate + reduced [flavodoxin]. It participates in isoprenoid biosynthesis; isopentenyl diphosphate biosynthesis via DXP pathway; isopentenyl diphosphate from 1-deoxy-D-xylulose 5-phosphate: step 5/6. In terms of biological role, converts 2C-methyl-D-erythritol 2,4-cyclodiphosphate (ME-2,4cPP) into 1-hydroxy-2-methyl-2-(E)-butenyl 4-diphosphate. This chain is 4-hydroxy-3-methylbut-2-en-1-yl diphosphate synthase (flavodoxin), found in Escherichia coli O139:H28 (strain E24377A / ETEC).